We begin with the raw amino-acid sequence, 276 residues long: Sec-independent protein translocase protein TatC (276 aa).

Residues 1–29 (MVSLTSVPPYADATPDTRASSGPAPGRRK) are disordered. 6 helical membrane-spanning segments follow: residues 49–69 (GGLV…LVLL), 103–123 (LFLA…AFVT), 136–156 (GFLG…WWVL), 187–207 (LVLA…LNLA), 221–241 (WAVL…DALT), and 242–262 (MVLV…VAVW).

Belongs to the TatC family. The Tat system comprises two distinct complexes: a TatABC complex, containing multiple copies of TatA, TatB and TatC subunits, and a separate TatA complex, containing only TatA subunits. Substrates initially bind to the TatABC complex, which probably triggers association of the separate TatA complex to form the active translocon.

Its subcellular location is the cell membrane. In terms of biological role, part of the twin-arginine translocation (Tat) system that transports large folded proteins containing a characteristic twin-arginine motif in their signal peptide across membranes. Together with TatB, TatC is part of a receptor directly interacting with Tat signal peptides. In Xylanimonas cellulosilytica (strain DSM 15894 / JCM 12276 / CECT 5975 / KCTC 9989 / LMG 20990 / NBRC 107835 / XIL07), this protein is Sec-independent protein translocase protein TatC.